Consider the following 257-residue polypeptide: Phosphonates import ATP-binding protein PhnC (257 aa).

The ABC transporter domain maps to 2–246 (IEFRNVSKVY…KFAEIYGDVA (245 aa)). 35 to 42 (GLSGAGKS) contributes to the ATP binding site.

This sequence belongs to the ABC transporter superfamily. Phosphonates importer (TC 3.A.1.9.1) family. In terms of assembly, the complex is composed of two ATP-binding proteins (PhnC), two transmembrane proteins (PhnE) and a solute-binding protein (PhnD).

The protein localises to the cell membrane. The enzyme catalyses phosphonate(out) + ATP + H2O = phosphonate(in) + ADP + phosphate + H(+). Part of the ABC transporter complex PhnCDE involved in phosphonates import. Responsible for energy coupling to the transport system. This Bacillus cereus (strain ATCC 14579 / DSM 31 / CCUG 7414 / JCM 2152 / NBRC 15305 / NCIMB 9373 / NCTC 2599 / NRRL B-3711) protein is Phosphonates import ATP-binding protein PhnC.